We begin with the raw amino-acid sequence, 251 residues long: Pyrroloquinoline-quinone synthase (251 aa).

It belongs to the PqqC family.

It carries out the reaction 6-(2-amino-2-carboxyethyl)-7,8-dioxo-1,2,3,4,7,8-hexahydroquinoline-2,4-dicarboxylate + 3 O2 = pyrroloquinoline quinone + 2 H2O2 + 2 H2O + H(+). It functions in the pathway cofactor biosynthesis; pyrroloquinoline quinone biosynthesis. In terms of biological role, ring cyclization and eight-electron oxidation of 3a-(2-amino-2-carboxyethyl)-4,5-dioxo-4,5,6,7,8,9-hexahydroquinoline-7,9-dicarboxylic-acid to PQQ. The sequence is that of Pyrroloquinoline-quinone synthase from Pseudomonas syringae pv. syringae (strain B728a).